Here is a 346-residue protein sequence, read N- to C-terminus: Phosphoribosylformylglycinamidine cyclo-ligase (346 aa).

The protein belongs to the AIR synthase family.

The protein localises to the cytoplasm. It catalyses the reaction 2-formamido-N(1)-(5-O-phospho-beta-D-ribosyl)acetamidine + ATP = 5-amino-1-(5-phospho-beta-D-ribosyl)imidazole + ADP + phosphate + H(+). It functions in the pathway purine metabolism; IMP biosynthesis via de novo pathway; 5-amino-1-(5-phospho-D-ribosyl)imidazole from N(2)-formyl-N(1)-(5-phospho-D-ribosyl)glycinamide: step 2/2. In Vibrio campbellii (strain ATCC BAA-1116), this protein is Phosphoribosylformylglycinamidine cyclo-ligase.